Consider the following 403-residue polypeptide: 3-(3-hydroxy-phenyl)propionate transporter (403 aa).

The Cytoplasmic portion of the chain corresponds to methionine 1–threonine 16. Residues isoleucine 17–alanine 37 traverse the membrane as a helical segment. The Periplasmic portion of the chain corresponds to alanine 38–glycine 53. A helical transmembrane segment spans residues tryptophan 54–alanine 74. Residues aspartate 75–arginine 81 are Cytoplasmic-facing. Residues isoleucine 82–aspartate 102 form a helical membrane-spanning segment. Topologically, residues phenylalanine 103–serine 105 are periplasmic. The chain crosses the membrane as a helical span at residues leucine 106–alanine 126. The Cytoplasmic segment spans residues leucine 127–serine 142. The helical transmembrane segment at leucine 143–alanine 163 threads the bilayer. Residue asparagine 164 is a topological domain, periplasmic. The chain crosses the membrane as a helical span at residues leucine 165–leucine 185. The Cytoplasmic portion of the chain corresponds to methionine 186–threonine 217. Residues leucine 218–leucine 238 form a helical membrane-spanning segment. The Periplasmic segment spans residues proline 239–alanine 253. The helical transmembrane segment at glycine 254–methionine 274 threads the bilayer. At aspartate 275 to proline 279 the chain is on the cytoplasmic side. Residues valine 280–valine 300 traverse the membrane as a helical segment. The Periplasmic portion of the chain corresponds to serine 301–methionine 306. The chain crosses the membrane as a helical span at residues leucine 307–leucine 327. At alanine 328 to threonine 339 the chain is on the cytoplasmic side. The helical transmembrane segment at glycine 340–glycine 360 threads the bilayer. Over lysine 361–threonine 369 the chain is Periplasmic. A helical transmembrane segment spans residues valine 370–leucine 390. Residues methionine 391–alanine 403 lie on the Cytoplasmic side of the membrane.

It belongs to the major facilitator superfamily. Aromatic acid:H(+) symporter (AAHS) (TC 2.A.1.15) family.

Its subcellular location is the cell inner membrane. It carries out the reaction 3-(3-hydroxyphenyl)propanoate(in) + H(+)(in) = 3-(3-hydroxyphenyl)propanoate(out) + H(+)(out). Inhibited by carbonyl cyanide m-chlorophenylhydrazone (CCCP), which dissipates the proton motive force. In terms of biological role, uptake of 3-(3-hydroxyphenyl)propionate (3HPP) across the cytoplasmic membrane. Transport is driven by the proton motive force. Does not transport benzoate, 3-hydroxybenzoate or gentisate. The chain is 3-(3-hydroxy-phenyl)propionate transporter from Escherichia coli (strain K12).